The primary structure comprises 877 residues: MSGGRDSSTSSGSNSAAPGASTNATSSASASASSTSTSASPGSTTSPASTQRQRGRPAKRATCTWCGEGKLPLQYVLPTQTGKKEFCSETCIAEFRKAYSKGACTQCDNVIRDGAPNKEFCSIMCMNKHQKKNCSTRHSGGSASGKGLAESERKLLASGAPAPTGPFQYESFHVFDWDAYLEETGSEAAPAKCFKQAQNPPNNDFKIGMKLEALDPRNVTSTCIATVVGVLGSRLRLRLDGSDSQNDFWRLVDSTEIHAIGHCEKNGGMLQPPLGFRMNASSWPGYLCKILNNAMVAPEEIFQPEPPEPEENLFKVGQKLEAVDKKNPQLICCATVDAIKDDQIHVTFDGWRGAFDYWCNYRSRDIFPAGWCARSCHPMQPPGHKSRMDSSSSKQRCPRPRYTVVAESEAMVPASPATAHFHPNCKGGPFINNSKLPCMVTGPTYQTLAKLCLQEVLAASTDTQQLSKLLFALEGDVHIVTAAGKNFTVKIPSPMRMKDDESLAQFIETLCTTCRACANLISLVHETEECKKCANSRKRQLTQSATPPSSPVLADKRNRQSNSATTSPSEKIIKQELAVKSPVESKSKTSTNNGKEPASQQNSNHSLNNNNNSASKSSNKVVIKSEPNGANAQTSSTTQALRKVRFQHHANTNTNSSATNGNQDTSQTTHVSTSHCSSSSTSSSTSLAGGSANTSTIGKYLAPLVAEVHPEQANVKPSNSYYKSPTTLSSSASLPTSVSTPFTGCQSASSTALAAGGVTAAKAATAPAGAAATAGASPSYTAITSPVSTPTSALANSHLRSQPIDWTIEEVIQYIESNDNSLAVHGDLFRKHEIDGKALLLLNSEMMMKYMGLKLGPALKICNLVNKVNGRRNNLAL.

The interval 1–57 is disordered; that stretch reads MSGGRDSSTSSGSNSAAPGASTNATSSASASASSTSTSASPGSTTSPASTQRQRGRP. Residues 7-50 are compositionally biased toward low complexity; the sequence is SSTSSGSNSAAPGASTNATSSASASASSTSTSASPGSTTSPAST. The FCS-type zinc finger occupies 54–93; the sequence is RGRPAKRATCTWCGEGKLPLQYVLPTQTGKKEFCSETCIA. Residues C63, C66, C87, and C91 each contribute to the Zn(2+) site. MBT repeat units follow at residues 175–273 and 281–382; these read FDWD…LQPP and SSWP…MQPP. 3 disordered regions span residues 535 to 621, 652 to 692, and 713 to 735; these read NSRK…SNKV, TNTN…GGSA, and ANVK…ASLP. T546 carries the phosphothreonine modification. S549 and S550 each carry phosphoserine. Residues 560–569 show a composition bias toward polar residues; it reads QSNSATTSPS. S585 bears the Phosphoserine mark. The segment covering 598-620 has biased composition (low complexity); it reads ASQQNSNHSLNNNNNSASKSSNK. Low complexity predominate over residues 724 to 735; sequence SPTTLSSSASLP. An SAM domain is found at 806–876; the sequence is WTIEEVIQYI…KVNGRRNNLA (71 aa).

It belongs to the SCM family. Scm associates with the PRC1 core complex containing PSC, PC, PH and Sce/RING1. Forms homotypic and heterotypic interactions. Interacts with the SAM domain of ph-p via its SAM domain in vitro. Interacts with corto in vitro.

The protein localises to the nucleus. Functionally, polycomb group (PcG) protein. PcG proteins act by forming multiprotein complexes, which are required to maintain the transcriptionally repressive state of homeotic genes throughout development. PcG proteins are not required to initiate repression, but to maintain it during later stages of development. They probably act via the methylation of histones, rendering chromatin heritably changed in its expressibility. The chain is Polycomb protein Scm from Drosophila melanogaster (Fruit fly).